A 442-amino-acid polypeptide reads, in one-letter code: MRRTRRPRFVLMNKMDDLNLHYRFLNWRRRIREIREVRAFRYQERFKHILVDGDTLSYHGNSGEVGCYVASRPLTKDSNYFEVSIVDSGVRGTIAVGLVPQYYSLDHQPGWLPDSVAYHADDGKLYNGRAKGRQFGSKCNSGDRIGCGIEPVSFDVQTAQIFFTKNGKRVGSTIMPMSPDGLFPAVGMHSLGEEVRLHLNAELGREDDSVMMVDSYEDEWGRLHDVRVCGTLLEYLGKGKSIVDVGLAQARHPLSTRSHYFEVEIVDPGEKCYIALGLARKDYPKNRHPGWSRGSVAYHADDGKIFHGSGVGDPFEPRCYKGDIMGCGIMFPRDYILDSEGDSDDSCDTVILSPTARAARNVRNVMYLHQEGEEEEEEEEEEEDGEEIEPEHEGRKVVVFFTRNGKIIGKKDAVVPSGGFFPTIGMLSCGEKVKVDLHPLSG.

Residues 17–204 enclose the B30.2/SPRY domain; that stretch reads DLNLHYRFLN…VRLHLNAELG (188 aa). Residues 371 to 394 are disordered; that stretch reads EGEEEEEEEEEEEDGEEIEPEHEG. Acidic residues predominate over residues 372–390; that stretch reads GEEEEEEEEEEEDGEEIEP.

The chain is SPRY domain-containing protein 3 (SPRYD3) from Pongo abelii (Sumatran orangutan).